The primary structure comprises 138 residues: MSLLQPRKVKWRKPQKGRTKGKATRRNQVDFGEYGLQALEPGRLTSRQIEAARIAIVREAKKGAKVWIRVFPHKPVTKKPAETRMGKGKGDLDHYEAIVKPGHILFELAGVPEEVAAEAFRKAGHKLPIKTRLVKSVE.

Residues 1–29 (MSLLQPRKVKWRKPQKGRTKGKATRRNQV) form a disordered region. A compositionally biased stretch (basic residues) spans 7-25 (RKVKWRKPQKGRTKGKATR).

This sequence belongs to the universal ribosomal protein uL16 family. In terms of assembly, part of the 50S ribosomal subunit.

Binds 23S rRNA and is also seen to make contacts with the A and possibly P site tRNAs. The sequence is that of Large ribosomal subunit protein uL16 from Sulfurihydrogenibium sp. (strain YO3AOP1).